The following is a 429-amino-acid chain: Histidine--tRNA ligase (429 aa).

The protein belongs to the class-II aminoacyl-tRNA synthetase family. Homodimer.

It localises to the cytoplasm. It carries out the reaction tRNA(His) + L-histidine + ATP = L-histidyl-tRNA(His) + AMP + diphosphate + H(+). This Oceanobacillus iheyensis (strain DSM 14371 / CIP 107618 / JCM 11309 / KCTC 3954 / HTE831) protein is Histidine--tRNA ligase.